A 425-amino-acid polypeptide reads, in one-letter code: Glucose-1-phosphate adenylyltransferase (425 aa).

Residues tyrosine 109, glycine 175, 190–191 (EK), and serine 208 each bind alpha-D-glucose 1-phosphate.

The protein belongs to the bacterial/plant glucose-1-phosphate adenylyltransferase family. Homotetramer.

It catalyses the reaction alpha-D-glucose 1-phosphate + ATP + H(+) = ADP-alpha-D-glucose + diphosphate. The protein operates within glycan biosynthesis; glycogen biosynthesis. Its function is as follows. Involved in the biosynthesis of ADP-glucose, a building block required for the elongation reactions to produce glycogen. Catalyzes the reaction between ATP and alpha-D-glucose 1-phosphate (G1P) to produce pyrophosphate and ADP-Glc. This is Glucose-1-phosphate adenylyltransferase from Saccharophagus degradans (strain 2-40 / ATCC 43961 / DSM 17024).